We begin with the raw amino-acid sequence, 428 residues long: 3-phosphoshikimate 1-carboxyvinyltransferase (428 aa).

3-phosphoshikimate contacts are provided by lysine 23, serine 24, and arginine 28. Lysine 23 is a binding site for phosphoenolpyruvate. Glycine 97 and arginine 125 together coordinate phosphoenolpyruvate. Positions 170, 171, 172, 198, 314, 337, and 341 each coordinate 3-phosphoshikimate. Glutamine 172 provides a ligand contact to phosphoenolpyruvate. The Proton acceptor role is filled by aspartate 314. Phosphoenolpyruvate is bound by residues arginine 345, arginine 387, and lysine 412.

The protein belongs to the EPSP synthase family. In terms of assembly, monomer.

The protein localises to the cytoplasm. It catalyses the reaction 3-phosphoshikimate + phosphoenolpyruvate = 5-O-(1-carboxyvinyl)-3-phosphoshikimate + phosphate. The protein operates within metabolic intermediate biosynthesis; chorismate biosynthesis; chorismate from D-erythrose 4-phosphate and phosphoenolpyruvate: step 6/7. Its function is as follows. Catalyzes the transfer of the enolpyruvyl moiety of phosphoenolpyruvate (PEP) to the 5-hydroxyl of shikimate-3-phosphate (S3P) to produce enolpyruvyl shikimate-3-phosphate and inorganic phosphate. The sequence is that of 3-phosphoshikimate 1-carboxyvinyltransferase from Edwardsiella ictaluri (strain 93-146).